A 172-amino-acid chain; its full sequence is Co-chaperone protein HscB homolog (172 aa).

Residues 2–74 (NHFELFGLVE…LRRAEYLLSL (73 aa)) form the J domain.

The protein belongs to the HscB family. As to quaternary structure, interacts with HscA and stimulates its ATPase activity.

Its function is as follows. Co-chaperone involved in the maturation of iron-sulfur cluster-containing proteins. Seems to help targeting proteins to be folded toward HscA. The sequence is that of Co-chaperone protein HscB homolog from Aeromonas salmonicida (strain A449).